The sequence spans 61 residues: Metallothionein-2D (61 aa).

N-acetylmethionine is present on Met-1. A beta region spans residues 1 to 29; that stretch reads MDPNCSCATRDSCACASSCKCKECKCTSC. A divalent metal cation contacts are provided by Cys-5, Cys-7, Cys-13, Cys-15, Cys-19, Cys-21, Cys-24, Cys-26, Cys-29, Cys-33, Cys-34, Cys-36, Cys-37, Cys-41, Cys-44, Cys-48, Cys-50, Cys-57, Cys-59, and Cys-60. Positions 30 to 61 are alpha; the sequence is KKSCCSCCPAGCTKCAQGCICKGASDKCSCCA.

Belongs to the metallothionein superfamily. Type 1 family. As to quaternary structure, monomer.

In terms of biological role, metallothioneins have a high content of cysteine residues that bind various heavy metals; these proteins are transcriptionally regulated by both heavy metals and glucocorticoids. This Oryctolagus cuniculus (Rabbit) protein is Metallothionein-2D.